We begin with the raw amino-acid sequence, 1348 residues long: Adhesion G protein-coupled receptor F5 (1348 aa).

Residues 1 to 21 (MRSPRTFTFYFLLLVICSSEA) form the signal peptide. The Extracellular segment spans residues 22–1019 (ALSTPTEPIV…LKILLDIISY (998 aa)). Positions 163–271 (PEAFITLKLK…NSFQGTPSNE (109 aa)) constitute an SEA domain. 3 consecutive Ig-like domains span residues 268 to 366 (PSNE…LDVT), 367 to 464 (PIRI…IAVT), and 469 to 559 (ANLT…KDVT). N-linked (GlcNAc...) asparagine glycosylation is found at Asn-270, Asn-286, Asn-337, and Asn-349. A disulfide bridge links Cys-291 with Cys-348. Residues Cys-389 and Cys-447 are joined by a disulfide bond. 3 N-linked (GlcNAc...) asparagine glycosylation sites follow: Asn-470, Asn-538, and Asn-665. Cys-490 and Cys-543 are disulfide-bonded. At Ser-818 the chain carries Phosphoserine. Residues 841–1005 (TPPFLAHPNV…SILMSPDSPD (165 aa)) enclose the GAIN-B domain. Disulfide bonds link Cys-953–Cys-987 and Cys-972–Cys-989. The segment at 953-1005 (CVFWNFSLANNTGGWDSSGCSVEDDGRDNRDRVFCKCNHLTSFSILMSPDSPD) is GPS. The tract at residues 993–1008 (TSFSILMSPDSPDPGS) is tethered agonist. A helical membrane pass occupies residues 1020-1040 (IGLGFSIVSLAACLVVEAMVW). The Cytoplasmic segment spans residues 1041-1055 (KSVTKNRTSYMRHIC). The helical transmembrane segment at 1056–1076 (IVNIAFCLLIADIWFIVAGAI) threads the bilayer. Over 1077–1092 (HDGRYPLNETACVAAT) the chain is Extracellular. Residues 1093 to 1113 (FFIHFFYLSVFFWMLTLGLML) traverse the membrane as a helical segment. The Cytoplasmic portion of the chain corresponds to 1114–1130 (FYRLIFILHDASKSTQK). The helical transmembrane segment at 1131 to 1151 (AIAFSLGYGCPLIISSITVGV) threads the bilayer. At 1152 to 1175 (TQPQEVYMRKNACWLNWEDTRALL) the chain is on the extracellular side. Residues 1176–1196 (AFAIPALIIVVVNVSITVVVI) traverse the membrane as a helical segment. Residues 1197-1221 (TKILRPSIGDKPGKQEKSSLFQISK) are Cytoplasmic-facing. A helical membrane pass occupies residues 1222–1242 (SIGVLTPLLGLTWGFGLATVI). The Extracellular portion of the chain corresponds to 1243–1250 (QGSNAVFH). Residues 1251-1271 (IIFTLLNAFQGLFILLFGCLW) form a helical membrane-spanning segment. Topologically, residues 1272–1348 (DQKVQEALLH…NSSSAYSLLN (77 aa)) are cytoplasmic. At Thr-1302 the chain carries Phosphothreonine. The residue at position 1309 (Ser-1309) is a Phosphoserine. The tract at residues 1328 to 1348 (STPETTSSSLENSSSAYSLLN) is disordered.

This sequence belongs to the G-protein coupled receptor 2 family. Adhesion G-protein coupled receptor (ADGR) subfamily. In terms of assembly, homodimer; disulfide-linked. Heterodimer of 2 chains generated by proteolytic processing; the large extracellular N-terminal fragment and the membrane-bound C-terminal fragment predominantly remain associated and non-covalently linked. Fragment generates by the processing enzyme furin remains attached to the extracellular N-terminal fragment. Interacts (via N-terminal extracellular domain) with SFTPD. Highly glycosylated. In terms of processing, proteolytically cleaved at multiple sites: one in the GPS region of the GAIN-B domain (S1 site) and the other in the SEA domain (S2 site). The proteolytic cleavage at S1 site generates an extracellular subunit and a seven-transmembrane subunit. The proteolytic cleavage at S2 site generates a fragment that undergoes proteolytic cleavage by the processing enzyme furin. In terms of tissue distribution, widely expressed, with highest levels in lung, pancreas, kidney and heart. In the kidney, expressed more abundantly in the medulla than in the cortex, predominantly expressed in A-intercalated cells (at protein level). Expressed in endothelial cells from various tissues, including brain, heart, kidney, liver, lung and muscle. In the lung, expressed in alveolar type II (ATII) cells (at protein level). Expressed in pancreatic islets of Langerhans, predominantly in delta cells, as well as in endothelial cells. Expressed in white adipose tissue.

It localises to the cell membrane. With respect to regulation, as an adhesion G protein-coupled receptor (aGPCR) exhibits a large N-terminal extracellular domain containing highly conserved GPCR autoproteolysis-inducing (GAIN) domain. During synthesis, intracellular autoproteolytic processing of nascent chain within the GAIN domain generates a mature protein, consisting of an N-terminal fragment that is non-covalently linked to the C-terminal fragment. The mature protein is routed to the plasma membrane where the N- and C-terminal fragments remain associated, forming the holoreceptor. Dissociation of the aGPCR fragments stimulates G protein signaling through the action of the tethered-peptide agonist stalk that is occluded within the GAIN domain in the holoreceptor form. This dissociation might be induced by ligand binding, such as that of sFNDC4. Its function is as follows. Adhesion G protein-coupled receptor. In alveolar type II (ATII or AT2) cells, required for normal lung surfactant homeostasis. Modulation of both surfactant secretion and uptake by ATII cells is mediated by the downstream activation of GNAQ/GNA11 proteins and may be a consequence of increased cortical F-actin assembly induced by ADGRF5 activation. In the kidney, may play a role in the regulation of acid excretion into the primary urine, possibly by regulating the surface expression of V-ATPase proton pump. As a receptor for soluble FNDC4 (sFNDC4), required for proper systemic glucose tolerance, specifically sensitizing white adipose tissue to insulin. Also plays a role in sFNDC4-induced decrease of local inflammation in white adipose tissue. The sequence is that of Adhesion G protein-coupled receptor F5 (Adgrf5) from Mus musculus (Mouse).